Reading from the N-terminus, the 573-residue chain is 3-(3-hydroxy-phenyl)propionate/3-hydroxycinnamic acid hydroxylase (573 aa).

Residues 18 to 47 (DVVI…IVEE) and 283 to 293 (FRKGRMFLAGD) contribute to the FAD site.

The protein belongs to the PheA/TfdB FAD monooxygenase family. FAD is required as a cofactor.

The catalysed reaction is 3-(3-hydroxyphenyl)propanoate + NADH + O2 + H(+) = 3-(2,3-dihydroxyphenyl)propanoate + NAD(+) + H2O. It carries out the reaction (2E)-3-(3-hydroxyphenyl)prop-2-enoate + NADH + O2 + H(+) = (2E)-3-(2,3-dihydroxyphenyl)prop-2-enoate + NAD(+) + H2O. Its pathway is aromatic compound metabolism; 3-phenylpropanoate degradation. Catalyzes the insertion of one atom of molecular oxygen into position 2 of the phenyl ring of 3-(3-hydroxyphenyl)propionate (3-HPP) and hydroxycinnamic acid (3HCI). This is 3-(3-hydroxy-phenyl)propionate/3-hydroxycinnamic acid hydroxylase from Mycobacterium sp. (strain KMS).